A 168-amino-acid polypeptide reads, in one-letter code: ATP synthase subunit b (168 aa).

The chain crosses the membrane as a helical span at residues 7–26 (FVLSNFIFTLINLWIMYWVL).

This sequence belongs to the ATPase B chain family. F-type ATPases have 2 components, F(1) - the catalytic core - and F(0) - the membrane proton channel. F(1) has five subunits: alpha(3), beta(3), gamma(1), delta(1), epsilon(1). F(0) has three main subunits: a(1), b(2) and c(10-14). The alpha and beta chains form an alternating ring which encloses part of the gamma chain. F(1) is attached to F(0) by a central stalk formed by the gamma and epsilon chains, while a peripheral stalk is formed by the delta and b chains.

The protein localises to the cell membrane. F(1)F(0) ATP synthase produces ATP from ADP in the presence of a proton or sodium gradient. F-type ATPases consist of two structural domains, F(1) containing the extramembraneous catalytic core and F(0) containing the membrane proton channel, linked together by a central stalk and a peripheral stalk. During catalysis, ATP synthesis in the catalytic domain of F(1) is coupled via a rotary mechanism of the central stalk subunits to proton translocation. Its function is as follows. Component of the F(0) channel, it forms part of the peripheral stalk, linking F(1) to F(0). In Alkaliphilus metalliredigens (strain QYMF), this protein is ATP synthase subunit b.